A 47-amino-acid chain; its full sequence is Diuretic hormone 2 (47 aa).

This sequence belongs to the sauvagine/corticotropin-releasing factor/urotensin I family.

The protein resides in the secreted. Its function is as follows. Stimulates fluid secretion by the Malpighian tubules. Increases cyclic AMP production in Malpighian tubules. The chain is Diuretic hormone 2 from Tenebrio molitor (Yellow mealworm beetle).